Reading from the N-terminus, the 209-residue chain is Large ribosomal subunit protein uL4 (209 aa).

Residues 46–71 (GTSSTKTRSEVRGSSKKPWKQKGTGR) are disordered. Over residues 59–71 (SSKKPWKQKGTGR) the composition is skewed to basic residues.

It belongs to the universal ribosomal protein uL4 family. Part of the 50S ribosomal subunit.

One of the primary rRNA binding proteins, this protein initially binds near the 5'-end of the 23S rRNA. It is important during the early stages of 50S assembly. It makes multiple contacts with different domains of the 23S rRNA in the assembled 50S subunit and ribosome. In terms of biological role, forms part of the polypeptide exit tunnel. The chain is Large ribosomal subunit protein uL4 from Borreliella afzelii (strain PKo) (Borrelia afzelii).